The primary structure comprises 142 residues: Large ribosomal subunit protein uL13 (142 aa).

It belongs to the universal ribosomal protein uL13 family. As to quaternary structure, part of the 50S ribosomal subunit.

In terms of biological role, this protein is one of the early assembly proteins of the 50S ribosomal subunit, although it is not seen to bind rRNA by itself. It is important during the early stages of 50S assembly. This Hahella chejuensis (strain KCTC 2396) protein is Large ribosomal subunit protein uL13.